The following is a 459-amino-acid chain: Flagellar radial spoke protein 6 (459 aa).

The residue at position 267 (Arg-267) is an Asymmetric dimethylarginine. The interval 309-330 (QGRTVTHKRDPPDEEEEPEKNF) is disordered. Asymmetric dimethylarginine is present on Arg-398. Positions 418-459 (CPPPPPVPQWGAPAAGVEGGQQLLLECNDLPPKPAPPEEEDE) are disordered.

Belongs to the flagellar radial spoke RSP4/6 family. The radial spoke head is made of five different polypeptides (RSP1, RSP4, RSP6, RSP9, and RSP10). In terms of processing, asymmetrically dimethylated at Arg-267 and Arg-398 during flagellum resorption. Probably methylated by PRMT1.

It is found in the cytoplasm. The protein resides in the cytoskeleton. Its subcellular location is the flagellum axoneme. Functionally, flagellar radial spokes contribute to the regulation of dynein arm activity and thus the pattern of flagellar bending. They consist of a thin stalk, which is attached to the a subfiber of the outer doublet microtubule, and a bulbous head, which is attached to the stalk and appears to interact with the projections from the central pair of microtubules. The polypeptide is Flagellar radial spoke protein 6 (RSP6) (Chlamydomonas reinhardtii (Chlamydomonas smithii)).